Here is a 337-residue protein sequence, read N- to C-terminus: DNA-directed RNA polymerase subunit alpha (337 aa).

The interval 1 to 233 (MIQKNWQELI…DQLALFINFK (233 aa)) is alpha N-terminal domain (alpha-NTD). The segment at 249–337 (FNPALLKKVD…DLAKRYEDQY (89 aa)) is alpha C-terminal domain (alpha-CTD).

It belongs to the RNA polymerase alpha chain family. As to quaternary structure, homodimer. The RNAP catalytic core consists of 2 alpha, 1 beta, 1 beta' and 1 omega subunit. When a sigma factor is associated with the core the holoenzyme is formed, which can initiate transcription.

The enzyme catalyses RNA(n) + a ribonucleoside 5'-triphosphate = RNA(n+1) + diphosphate. DNA-dependent RNA polymerase catalyzes the transcription of DNA into RNA using the four ribonucleoside triphosphates as substrates. This is DNA-directed RNA polymerase subunit alpha from Bartonella henselae (strain ATCC 49882 / DSM 28221 / CCUG 30454 / Houston 1) (Rochalimaea henselae).